Here is a 352-residue protein sequence, read N- to C-terminus: 4-hydroxy-3-methylbut-2-en-1-yl diphosphate synthase (flavodoxin) (352 aa).

Residues Cys-262, Cys-265, Cys-297, and Glu-304 each contribute to the [4Fe-4S] cluster site.

Belongs to the IspG family. [4Fe-4S] cluster is required as a cofactor.

The enzyme catalyses (2E)-4-hydroxy-3-methylbut-2-enyl diphosphate + oxidized [flavodoxin] + H2O + 2 H(+) = 2-C-methyl-D-erythritol 2,4-cyclic diphosphate + reduced [flavodoxin]. Its pathway is isoprenoid biosynthesis; isopentenyl diphosphate biosynthesis via DXP pathway; isopentenyl diphosphate from 1-deoxy-D-xylulose 5-phosphate: step 5/6. Functionally, converts 2C-methyl-D-erythritol 2,4-cyclodiphosphate (ME-2,4cPP) into 1-hydroxy-2-methyl-2-(E)-butenyl 4-diphosphate. This is 4-hydroxy-3-methylbut-2-en-1-yl diphosphate synthase (flavodoxin) from Nitratiruptor sp. (strain SB155-2).